We begin with the raw amino-acid sequence, 89 residues long: Large ribosomal subunit protein eL34 (89 aa).

The tract at residues 1-29 is disordered; that stretch reads MSAPRFRNGTFKRTLKRVPGGRKVEHYKK. Over residues 13–29 the composition is skewed to basic residues; it reads RTLKRVPGGRKVEHYKK.

It belongs to the eukaryotic ribosomal protein eL34 family.

This is Large ribosomal subunit protein eL34 from Methanosphaera stadtmanae (strain ATCC 43021 / DSM 3091 / JCM 11832 / MCB-3).